Consider the following 37-residue polypeptide: Photosystem II reaction center protein T (37 aa).

Residues 3 to 23 (ALVYTFLLVSTLGIIFFAIFF) traverse the membrane as a helical segment.

The protein belongs to the PsbT family. PSII is composed of 1 copy each of membrane proteins PsbA, PsbB, PsbC, PsbD, PsbE, PsbF, PsbH, PsbI, PsbJ, PsbK, PsbL, PsbM, PsbT, PsbY, PsbZ, Psb30/Ycf12, at least 3 peripheral proteins of the oxygen-evolving complex and a large number of cofactors. It forms dimeric complexes.

Its subcellular location is the plastid. It is found in the chloroplast thylakoid membrane. In terms of biological role, found at the monomer-monomer interface of the photosystem II (PS II) dimer, plays a role in assembly and dimerization of PSII. PSII is a light-driven water plastoquinone oxidoreductase, using light energy to abstract electrons from H(2)O, generating a proton gradient subsequently used for ATP formation. The polypeptide is Photosystem II reaction center protein T (Cucumis sativus (Cucumber)).